Reading from the N-terminus, the 269-residue chain is Transmembrane protein 41B (269 aa).

6 helical membrane passes run 30–50 (TSLLILVSIFTIAAFLMFLVY), 87–107 (FYVQVLVAYFATYVFLQTFAI), 125–147 (LALFLVCLCSGLGASFCYMLSYL), 175–195 (LINYIIFLRITPFLPNWFINI), 203–223 (PLKVFFIGTFLGVAPPSFVAI), and 240–260 (SWNSLFVLMILAILSILPALF). The segment at 118-229 (GFLYPFPLAL…FVAIKAGTTL (112 aa)) is VTT domain; required for its function in autophagy.

This sequence belongs to the TMEM41 family.

The protein resides in the endoplasmic reticulum membrane. It localises to the endomembrane system. The enzyme catalyses a 1,2-diacyl-sn-glycero-3-phospho-L-serine(in) = a 1,2-diacyl-sn-glycero-3-phospho-L-serine(out). It catalyses the reaction cholesterol(in) = cholesterol(out). It carries out the reaction a 1,2-diacyl-sn-glycero-3-phosphocholine(in) = a 1,2-diacyl-sn-glycero-3-phosphocholine(out). The catalysed reaction is a 1,2-diacyl-sn-glycero-3-phosphoethanolamine(in) = a 1,2-diacyl-sn-glycero-3-phosphoethanolamine(out). In terms of biological role, phospholipid scramblase involved in lipid homeostasis and membrane dynamics processes. Has phospholipid scramblase activity toward cholesterol and phosphatidylserine, as well as phosphatidylethanolamine and phosphatidylcholine. Required for autophagosome formation: participates in early stages of autophagosome biogenesis at the endoplasmic reticulum (ER) membrane by reequilibrating the leaflets of the ER as lipids are extracted by ATG2 (ATG2A or ATG2B) to mediate autophagosome assembly. In addition to autophagy, involved in other processes in which phospholipid scramblase activity is required. Required for normal motor neuron development. The protein is Transmembrane protein 41B of Gallus gallus (Chicken).